The chain runs to 682 residues: Protein SPT2 homolog (682 aa).

Residues 1–569 form an important for interaction with DNA region; sequence MDFREILLIA…PLLSGYRSAQ (569 aa). Lysine 37 is covalently cross-linked (Glycyl lysine isopeptide (Lys-Gly) (interchain with G-Cter in SUMO2)). The stretch at 46 to 82 forms a coiled coil; the sequence is AFLRRKEEELRQKALEEKKRKEELVKKRIELKHDKKA. The segment at 80–170 is disordered; that stretch reads KKARAMAKRT…SAPSPMNFTD (91 aa). Residues 101 to 111 show a composition bias toward basic and acidic residues; it reads VEEKTKKKQLV. The span at 121–131 shows a compositional bias: acidic residues; the sequence is QEYDVEEEDFI. The span at 156–165 shows a compositional bias: low complexity; it reads KAPLKSAPSP. Lysine 186 participates in a covalent cross-link: Glycyl lysine isopeptide (Lys-Gly) (interchain with G-Cter in SUMO2). Positions 187–208 are enriched in basic and acidic residues; it reads VVKKAEDRPLTAEELREREFLE. Disordered stretches follow at residues 187 to 533 and 549 to 595; these read VVKK…TKPR and RSSN…DEYD. 5 stretches are compositionally biased toward polar residues: residues 267–280, 317–334, 371–393, 400–409, and 419–432; these read STAS…SSPK, STCS…TQKS, PGSN…TLSS, QNGSSSSGPE, and ASNS…LNGT. Residue serine 277 is modified to Phosphoserine. Composition is skewed to low complexity over residues 435–460 and 490–504; these read PGRP…RPVG and SGPG…PAGR. The important for interaction with histones stretch occupies residues 570 to 682; it reads GPQRLPFPTG…RRKAKKLKRH (113 aa). Lysine 581 is subject to N6-acetyllysine. The span at 586–595 shows a compositional bias: acidic residues; it reads YEEDDDDEYD. Position 596 is a phosphoserine (serine 596). Basic and acidic residues-rich tracts occupy residues 641-652 and 663-672; these read SWKEQQKEEAKS and EMRREEEELK. Positions 641–682 are disordered; it reads SWKEQQKEEAKSLRLGMQEDLEEMRREEEELKRRKAKKLKRH. The stretch at 642 to 682 forms a coiled coil; it reads WKEQQKEEAKSLRLGMQEDLEEMRREEEELKRRKAKKLKRH. The segment covering 673–682 has biased composition (basic residues); the sequence is RRKAKKLKRH.

Belongs to the SPT2 family. As to quaternary structure, interacts with histones. Interacts with a heterotetrameric complex formed by histone H3 and H4, especially when the histone tetramer is not bound to DNA. Interacts with histone H3.3.

The protein resides in the nucleus. The protein localises to the nucleolus. Its function is as follows. Histone chaperone that stabilizes pre-existing histone tetramers and regulates replication-independent histone exchange on chromatin. Required for normal chromatin refolding in the coding region of transcribed genes, and for the suppression of spurious transcription. Binds DNA and histones and promotes nucleosome assembly (in vitro). Facilitates formation of tetrameric histone complexes containing histone H3 and H4. Modulates RNA polymerase 1-mediated transcription. Binds DNA, with a preference for branched DNA species, such as Y-form DNA and Holliday junction DNA. The polypeptide is Protein SPT2 homolog (Spty2d1) (Mus musculus (Mouse)).